Reading from the N-terminus, the 211-residue chain is Large ribosomal subunit protein uL3 (211 aa).

Belongs to the universal ribosomal protein uL3 family. As to quaternary structure, part of the 50S ribosomal subunit. Forms a cluster with proteins L14 and L19.

Its function is as follows. One of the primary rRNA binding proteins, it binds directly near the 3'-end of the 23S rRNA, where it nucleates assembly of the 50S subunit. This is Large ribosomal subunit protein uL3 from Geotalea daltonii (strain DSM 22248 / JCM 15807 / FRC-32) (Geobacter daltonii).